The chain runs to 200 residues: dTTP/UTP pyrophosphatase (200 aa).

The active-site Proton acceptor is the aspartate 72.

Belongs to the Maf family. YhdE subfamily. A divalent metal cation is required as a cofactor.

It localises to the cytoplasm. The enzyme catalyses dTTP + H2O = dTMP + diphosphate + H(+). It carries out the reaction UTP + H2O = UMP + diphosphate + H(+). Its function is as follows. Nucleoside triphosphate pyrophosphatase that hydrolyzes dTTP and UTP. May have a dual role in cell division arrest and in preventing the incorporation of modified nucleotides into cellular nucleic acids. In Pseudomonas savastanoi pv. phaseolicola (strain 1448A / Race 6) (Pseudomonas syringae pv. phaseolicola (strain 1448A / Race 6)), this protein is dTTP/UTP pyrophosphatase.